Here is a 426-residue protein sequence, read N- to C-terminus: RuvB-like protein 1 (426 aa).

62–69 (GPVGSGKT) is a binding site for ATP.

The protein belongs to the RuvB family. Component of the SWR1 chromatin remodeling complex, the INO80 chromatin remodeling complex, and of the R2TP complex.

It localises to the nucleus. The enzyme catalyses ATP + H2O = ADP + phosphate + H(+). In terms of biological role, DNA helicase which participates in several chromatin remodeling complexes, including the SWR1 and the INO80 complexes. The SWR1 complex mediates the ATP-dependent exchange of histone H2A for the H2A variant HZT1 leading to transcriptional regulation of selected genes by chromatin remodeling. The INO80 complex remodels chromatin by shifting nucleosomes and is involved in DNA repair. Also involved in pre-rRNA processing. The protein is RuvB-like protein 1 (RVB1) of Encephalitozoon cuniculi (strain GB-M1) (Microsporidian parasite).